The primary structure comprises 317 residues: Electron transfer flavoprotein subunit alpha (317 aa).

The protein belongs to the ETF alpha-subunit/FixB family. Heterodimer of an alpha and a beta subunit. The cofactor is FAD.

The protein resides in the cytoplasm. Its pathway is lipid metabolism; butanoate metabolism. Functionally, part of an electron transfer flavoprotein involved in syntrophic growth of S.wolfei with butyrate. Probably receives electrons from butyryl-CoA dehydrogenases, and transfers them to the membrane-bound quinone oxidoreductase Swol_0698. The protein is Electron transfer flavoprotein subunit alpha of Syntrophomonas wolfei subsp. wolfei (strain DSM 2245B / Goettingen).